Here is a 159-residue protein sequence, read N- to C-terminus: ATP synthase subunit b (159 aa).

Residues 4 to 24 form a helical membrane-spanning segment; it reads VGINGTLIVQLVTFVILVALL.

The protein belongs to the ATPase B chain family. In terms of assembly, F-type ATPases have 2 components, F(1) - the catalytic core - and F(0) - the membrane proton channel. F(1) has five subunits: alpha(3), beta(3), gamma(1), delta(1), epsilon(1). F(0) has three main subunits: a(1), b(2) and c(10-14). The alpha and beta chains form an alternating ring which encloses part of the gamma chain. F(1) is attached to F(0) by a central stalk formed by the gamma and epsilon chains, while a peripheral stalk is formed by the delta and b chains.

The protein localises to the cell inner membrane. In terms of biological role, f(1)F(0) ATP synthase produces ATP from ADP in the presence of a proton or sodium gradient. F-type ATPases consist of two structural domains, F(1) containing the extramembraneous catalytic core and F(0) containing the membrane proton channel, linked together by a central stalk and a peripheral stalk. During catalysis, ATP synthesis in the catalytic domain of F(1) is coupled via a rotary mechanism of the central stalk subunits to proton translocation. Component of the F(0) channel, it forms part of the peripheral stalk, linking F(1) to F(0). The sequence is that of ATP synthase subunit b from Acidithiobacillus ferrooxidans (strain ATCC 23270 / DSM 14882 / CIP 104768 / NCIMB 8455) (Ferrobacillus ferrooxidans (strain ATCC 23270)).